Consider the following 133-residue polypeptide: ATP synthase epsilon chain, chloroplastic (133 aa).

It belongs to the ATPase epsilon chain family. As to quaternary structure, F-type ATPases have 2 components, CF(1) - the catalytic core - and CF(0) - the membrane proton channel. CF(1) has five subunits: alpha(3), beta(3), gamma(1), delta(1), epsilon(1). CF(0) has three main subunits: a, b and c.

The protein resides in the plastid. It is found in the chloroplast thylakoid membrane. In terms of biological role, produces ATP from ADP in the presence of a proton gradient across the membrane. The sequence is that of ATP synthase epsilon chain, chloroplastic from Chara vulgaris (Common stonewort).